The primary structure comprises 615 residues: DNA mismatch repair protein MutL (615 aa).

A disordered region spans residues 370–397 (EPVAPRYTPAPASGSRPAAPWPNTQPGY). A compositionally biased stretch (low complexity) spans 378-391 (PAPASGSRPAAPWP).

Belongs to the DNA mismatch repair MutL/HexB family.

This protein is involved in the repair of mismatches in DNA. It is required for dam-dependent methyl-directed DNA mismatch repair. May act as a 'molecular matchmaker', a protein that promotes the formation of a stable complex between two or more DNA-binding proteins in an ATP-dependent manner without itself being part of a final effector complex. This is DNA mismatch repair protein MutL from Shigella dysenteriae serotype 1 (strain Sd197).